Consider the following 243-residue polypeptide: UTP--glucose-1-phosphate uridylyltransferase AglF (243 aa).

The protein belongs to the UDPGP type 2 family.

The catalysed reaction is alpha-D-glucose 1-phosphate + UTP + H(+) = UDP-alpha-D-glucose + diphosphate. The protein operates within cell surface structure biogenesis; S-layer biogenesis. Its function is as follows. Involved in the assembly of a N-linked pentasaccharide that decorates the S-layer glycoprotein and flagellins. Involved in the biosynthesis of the hexuronic acid found at position 3 of the pentasaccharide. This is UTP--glucose-1-phosphate uridylyltransferase AglF (aglF) from Haloferax volcanii (strain ATCC 29605 / DSM 3757 / JCM 8879 / NBRC 14742 / NCIMB 2012 / VKM B-1768 / DS2) (Halobacterium volcanii).